Reading from the N-terminus, the 382-residue chain is Na(+)/H(+) antiporter NhaA (382 aa).

A run of 10 helical transmembrane segments spans residues 5-25 (INLL…ALAW), 42-62 (FGGV…FFGI), 88-108 (LATL…NAVI), 116-136 (GWGI…RLVF), 145-165 (FLLL…AVFY), 169-189 (VHPT…AAYI), 261-281 (IVVD…RFSS), 282-302 (VGTA…AGIL), 327-347 (TGLV…VAFV), and 353-373 (GAAK…VALG).

This sequence belongs to the NhaA Na(+)/H(+) (TC 2.A.33) antiporter family.

The protein resides in the cell inner membrane. It carries out the reaction Na(+)(in) + 2 H(+)(out) = Na(+)(out) + 2 H(+)(in). Functionally, na(+)/H(+) antiporter that extrudes sodium in exchange for external protons. This Geobacter metallireducens (strain ATCC 53774 / DSM 7210 / GS-15) protein is Na(+)/H(+) antiporter NhaA.